Consider the following 708-residue polypeptide: Lactotransferrin (708 aa).

Positions 1-19 (MKLLFLALLSLLALGPSLA) are cleaved as a signal peptide. Transferrin-like domains follow at residues 25–352 (VRWC…NLKE) and 364–693 (VVWC…NLRQ). 2 cysteine pairs are disulfide-bonded: C28–C64 and C38–C55. D79 is a binding site for Fe(3+). R92 is a catalytic residue. Position 111 (Y111) interacts with Fe(3+). 5 disulfide bridges follow: C134-C217, C176-C192, C179-C202, C189-C200, and C250-C264. A hydrogencarbonate-binding site is contributed by T136. A glycan (N-linked (GlcNAc...) asparagine) is linked at N139. Hydrogencarbonate is bound by residues R140, A142, and G143. Y211 contacts Fe(3+). H272 lines the Fe(3+) pocket. S278 (nucleophile) is an active-site residue. 2 cysteine pairs are disulfide-bonded: C367/C399 and C377/C390. Residue N385 is glycosylated (N-linked (GlcNAc...) asparagine). Residues D414 and D452 each coordinate Fe(3+). Disulfide bonds link C476/C551, C510/C524, C521/C534, and C592/C606. Hydrogencarbonate contacts are provided by T478, R482, A484, and G485. N495 carries N-linked (GlcNAc...) asparagine glycosylation. Y545 contacts Fe(3+). Fe(3+) is bound at residue H614.

It belongs to the transferrin family. Monomer. Found in a complex with LTF, CLU, EPPIN and SEMG1. Interacts with prey activated coagulation factor X; the interaction inhibits coagulation factor X catalytic activity. Found in a complex with MPO and LTF; interacts directly with CP, allows Fe(3+) incorporation into LTF and activation of CP ferroxidase activity. N-glycosylated. Glycosylation is important for draculin anticoagulant activity. Probably also O-glycosylated. In terms of tissue distribution, expressed in the submaxillary gland and secreted in the saliva (at protein level).

The protein resides in the secreted. Transferrins are iron binding transport proteins which can bind two Fe(3+) ions in association with the binding of an anion, usually bicarbonate. In terms of biological role, major iron-binding and multifunctional protein found in exocrine fluids such as breast milk and mucosal secretions. Has antimicrobial activity. Antimicrobial properties may include bacteriostasis, which is related to its ability to sequester free iron and thus inhibit microbial growth, as well as direct bactericidal properties leading to the release of lipopolysaccharides from the bacterial outer membrane. May have anabolic, differentiating and anti-apoptotic effects on osteoblasts and may also inhibit osteoclastogenesis, possibly playing a role in the regulation of bone growth. May interfere with the lipopolysaccharide (LPS)-stimulated TLR4 signaling. Functionally, the lactotransferrin transferrin-like domain 1 functions as a serine protease of the peptidase S60 family that cuts arginine rich regions. This function contributes to the antimicrobial activity. Shows a preferential cleavage at -Arg-Ser-Arg-Arg-|- and -Arg-Arg-Ser-Arg-|-, and of Z-Phe-Arg-|-aminomethylcoumarin sites. Its function is as follows. Acts as an anticoagulant of the blood coagulation cascade of the bat's prey by inhibiting coagulation factor IX and activated coagulation factor X. The chain is Lactotransferrin from Desmodus rotundus (Vampire bat).